The following is a 472-amino-acid chain: GTPase HflX (472 aa).

A disordered region spans residues 1-21 (MDTIDTPGEQGSQSFGNSLGA). Positions 230 to 396 (PTFALIGYTN…LMTEIIQEKS (167 aa)) constitute a Hflx-type G domain. GTP is bound by residues 236–243 (GYTNSGKS), 261–265 (FATLD), 283–286 (DTVG), 349–352 (NKVD), and 374–376 (SAK). The Mg(2+) site is built by Ser243 and Thr263.

This sequence belongs to the TRAFAC class OBG-HflX-like GTPase superfamily. HflX GTPase family. In terms of assembly, monomer. Associates with the 50S ribosomal subunit. Requires Mg(2+) as cofactor.

It localises to the cytoplasm. Functionally, GTPase that associates with the 50S ribosomal subunit and may have a role during protein synthesis or ribosome biogenesis. Specific for GTP. In Chlamydia pneumoniae (Chlamydophila pneumoniae), this protein is GTPase HflX.